We begin with the raw amino-acid sequence, 253 residues long: Probable proteasome subunit alpha type-7 (253 aa).

The residue at position 104 (Ser104) is a Phosphoserine.

Belongs to the peptidase T1A family. As to quaternary structure, the 26S proteasome consists of a 20S proteasome core and two 19S regulatory subunits. The 20S proteasome core is composed of 28 subunits that are arranged in four stacked rings, resulting in a barrel-shaped structure. The two end rings are each formed by seven alpha subunits, and the two central rings are each formed by seven beta subunits. The catalytic chamber with the active sites is on the inside of the barrel.

Its subcellular location is the cytoplasm. It is found in the nucleus. Functionally, the proteasome is a multicatalytic proteinase complex which is characterized by its ability to cleave peptides with Arg, Phe, Tyr, Leu, and Glu adjacent to the leaving group at neutral or slightly basic pH. The proteasome has an ATP-dependent proteolytic activity. The chain is Probable proteasome subunit alpha type-7 (pre10) from Schizosaccharomyces pombe (strain 972 / ATCC 24843) (Fission yeast).